An 806-amino-acid chain; its full sequence is Phenylalanine--tRNA ligase beta subunit (806 aa).

A tRNA-binding domain is found at 44-158 (ADGLSKLVVG…EEAVPGDAIF (115 aa)). In terms of domain architecture, B5 spans 411–486 (TEPVEVSTSL…RIYGYDKLPT (76 aa)). Mg(2+) is bound by residues D464, D470, E473, and E474. Positions 713 to 806 (TKFPAMTRDV…LTEQVGAEVR (94 aa)) constitute an FDX-ACB domain.

This sequence belongs to the phenylalanyl-tRNA synthetase beta subunit family. Type 1 subfamily. In terms of assembly, tetramer of two alpha and two beta subunits. It depends on Mg(2+) as a cofactor.

The protein localises to the cytoplasm. The enzyme catalyses tRNA(Phe) + L-phenylalanine + ATP = L-phenylalanyl-tRNA(Phe) + AMP + diphosphate + H(+). The sequence is that of Phenylalanine--tRNA ligase beta subunit from Streptococcus pyogenes serotype M28 (strain MGAS6180).